Reading from the N-terminus, the 389-residue chain is Aspartate aminotransferase (389 aa).

Residues G34 and N171 each coordinate L-aspartate. The residue at position 233 (K233) is an N6-(pyridoxal phosphate)lysine. Position 362 (R362) interacts with L-aspartate.

Belongs to the class-I pyridoxal-phosphate-dependent aminotransferase family. In terms of assembly, homodimer. Requires pyridoxal 5'-phosphate as cofactor.

The protein resides in the cytoplasm. The catalysed reaction is L-aspartate + 2-oxoglutarate = oxaloacetate + L-glutamate. This chain is Aspartate aminotransferase (aspC), found in Pyrococcus abyssi (strain GE5 / Orsay).